The following is a 514-amino-acid chain: Glutamate--cysteine ligase, chloroplastic (514 aa).

The N-terminal 55 residues, 1–55 (MALLSQAGGAYTVPSGHVSSRTGTKTVSGCVNVLRMKETYVSSYSRTLSTKSMLK), are a transit peptide targeting the chloroplast. 2 cysteine pairs are disulfide-bonded: Cys-178–Cys-398 and Cys-341–Cys-356.

It belongs to the carboxylate-amine ligase family. Glutamate--cysteine ligase type 2 subfamily. Homodimer or monomer when oxidized or reduced, respectively. The Cys-178-Cys-398 disulfide bridge is known to modulate the enzyme activity according to the redox status. The oxidized form constitutes the active enzyme.

It localises to the plastid. The protein resides in the chloroplast. It catalyses the reaction L-cysteine + L-glutamate + ATP = gamma-L-glutamyl-L-cysteine + ADP + phosphate + H(+). The protein operates within sulfur metabolism; glutathione biosynthesis; glutathione from L-cysteine and L-glutamate: step 1/2. In terms of biological role, participates in the detoxification process. The chain is Glutamate--cysteine ligase, chloroplastic (GSH1) from Brassica juncea (Indian mustard).